The following is a 181-amino-acid chain: MKLNVTIEIPKNSNIKYEYDRATKEIMVDRILHGSMVYPHNYGFLKEALDYDGDELDVLVFADQAFQPGIKVPARVLGAMKMIDGGETDTKLLAVIDVDPRYKHINNFKDIPLHWLAEVQDFFENYKNLQNKKVKILGFEDEIWAQKEYEECVLLMKEYGHLKKDEFVTKMMKERPEKYIK.

Substrate-binding residues include Lys16, Arg30, and Tyr42. The Mg(2+) site is built by Asp52, Asp57, and Asp89. Tyr126 serves as a coordination point for substrate.

Belongs to the PPase family. As to quaternary structure, homohexamer. It depends on Mg(2+) as a cofactor.

The protein localises to the cytoplasm. It catalyses the reaction diphosphate + H2O = 2 phosphate + H(+). Catalyzes the hydrolysis of inorganic pyrophosphate (PPi) forming two phosphate ions. The sequence is that of Inorganic pyrophosphatase from Ureaplasma parvum serovar 3 (strain ATCC 700970).